Here is a 521-residue protein sequence, read N- to C-terminus: DEAD-box ATP-dependent RNA helicase 12 (521 aa).

The segment at 1–97 (MHHPRARYPP…QQWLRRDQAT (97 aa)) is disordered. Over residues 13–50 (TSGGGGGGGGGGGGGRGNGGGGFGGGGGGGGGNHGYYG) the composition is skewed to gly residues. Residues 51–89 (RGPQPQPQQQHYHHQAQQLHQHQQQQQHAQRNSSSQQQQ) show a composition bias toward low complexity. Positions 147–175 (NEFEDYFLKRELLMGIYEKGFERPSPIQE) match the Q motif motif. In terms of domain architecture, Helicase ATP-binding spans 178–348 (IPIALTGSDI…EKYLPRPYVI (171 aa)). 191–198 (AKNGTGKT) contributes to the ATP binding site. The DEAD box motif lies at 296–299 (DEAD). A Helicase C-terminal domain is found at 358-518 (GITQYYAFVE…TIPPQIDLAV (161 aa)).

The protein belongs to the DEAD box helicase family. DDX6/DHH1 subfamily.

The protein resides in the cytoplasm. It localises to the P-body. The enzyme catalyses ATP + H2O = ADP + phosphate + H(+). In terms of biological role, ATP-dependent RNA helicase involved in mRNA turnover, and more specifically in mRNA decapping. The chain is DEAD-box ATP-dependent RNA helicase 12 from Oryza sativa subsp. japonica (Rice).